The following is a 482-amino-acid chain: Glutamyl-tRNA(Gln) amidotransferase subunit A (482 aa).

Active-site charge relay system residues include Lys75 and Ser150. Ser174 (acyl-ester intermediate) is an active-site residue.

It belongs to the amidase family. GatA subfamily. As to quaternary structure, heterotrimer of A, B and C subunits.

The enzyme catalyses L-glutamyl-tRNA(Gln) + L-glutamine + ATP + H2O = L-glutaminyl-tRNA(Gln) + L-glutamate + ADP + phosphate + H(+). In terms of biological role, allows the formation of correctly charged Gln-tRNA(Gln) through the transamidation of misacylated Glu-tRNA(Gln) in organisms which lack glutaminyl-tRNA synthetase. The reaction takes place in the presence of glutamine and ATP through an activated gamma-phospho-Glu-tRNA(Gln). In Thermosynechococcus vestitus (strain NIES-2133 / IAM M-273 / BP-1), this protein is Glutamyl-tRNA(Gln) amidotransferase subunit A.